The primary structure comprises 431 residues: 4-hydroxy-3-methylbut-2-en-1-yl diphosphate synthase (flavodoxin) (431 aa).

The disordered stretch occupies residues 1 to 21 (MNKLENPSQRDVAGPSPRHKT). Cys310, Cys313, Cys356, and Glu363 together coordinate [4Fe-4S] cluster.

This sequence belongs to the IspG family. [4Fe-4S] cluster serves as cofactor.

The catalysed reaction is (2E)-4-hydroxy-3-methylbut-2-enyl diphosphate + oxidized [flavodoxin] + H2O + 2 H(+) = 2-C-methyl-D-erythritol 2,4-cyclic diphosphate + reduced [flavodoxin]. Its pathway is isoprenoid biosynthesis; isopentenyl diphosphate biosynthesis via DXP pathway; isopentenyl diphosphate from 1-deoxy-D-xylulose 5-phosphate: step 5/6. In terms of biological role, converts 2C-methyl-D-erythritol 2,4-cyclodiphosphate (ME-2,4cPP) into 1-hydroxy-2-methyl-2-(E)-butenyl 4-diphosphate. This Nitrobacter hamburgensis (strain DSM 10229 / NCIMB 13809 / X14) protein is 4-hydroxy-3-methylbut-2-en-1-yl diphosphate synthase (flavodoxin).